The primary structure comprises 558 residues: CTP synthase (558 aa).

Positions 1-270 (MTKYVFVTGG…DDLICRELDL (270 aa)) are amidoligase domain. Residue Ser13 coordinates CTP. Ser13 lines the UTP pocket. Residues 14-19 (SLGKGI) and Asp71 contribute to the ATP site. Mg(2+)-binding residues include Asp71 and Glu144. Residues 151 to 153 (DIE), 191 to 196 (KTKPTQ), and Lys227 each bind CTP. UTP is bound by residues 191–196 (KTKPTQ) and Lys227. The 253-residue stretch at 295-547 (TIGMVGKYVE…ISAALEHQKK (253 aa)) folds into the Glutamine amidotransferase type-1 domain. Gly356 contacts L-glutamine. Cys383 (nucleophile; for glutamine hydrolysis) is an active-site residue. L-glutamine-binding positions include 384–387 (LGMQ), Glu407, and Arg473. Active-site residues include His520 and Glu522.

It belongs to the CTP synthase family. Homotetramer.

The catalysed reaction is UTP + L-glutamine + ATP + H2O = CTP + L-glutamate + ADP + phosphate + 2 H(+). It carries out the reaction L-glutamine + H2O = L-glutamate + NH4(+). It catalyses the reaction UTP + NH4(+) + ATP = CTP + ADP + phosphate + 2 H(+). It participates in pyrimidine metabolism; CTP biosynthesis via de novo pathway; CTP from UDP: step 2/2. With respect to regulation, allosterically activated by GTP, when glutamine is the substrate; GTP has no effect on the reaction when ammonia is the substrate. The allosteric effector GTP functions by stabilizing the protein conformation that binds the tetrahedral intermediate(s) formed during glutamine hydrolysis. Inhibited by the product CTP, via allosteric rather than competitive inhibition. Its function is as follows. Catalyzes the ATP-dependent amination of UTP to CTP with either L-glutamine or ammonia as the source of nitrogen. Regulates intracellular CTP levels through interactions with the four ribonucleotide triphosphates. The chain is CTP synthase from Polynucleobacter necessarius subsp. necessarius (strain STIR1).